The primary structure comprises 557 residues: Nucleoporin AMO1 (557 aa).

Residues Met1–Lys25 form a C3H1-type zinc finger. Positions Gln114–Ala141 form a coiled coil. Positions Glu161–Phe297 are disordered. SXFG repeat units lie at residues Ser171–Gly174, Ser200–Gly203, Ser213–Gly216, Ser228–Gly231, Ser240–Gly243, Ser249–Gly252, Ser262–Gly265, Ser282–Gly285, Ser303–Gly306, and Ser314–Gly317. Polar residues predominate over residues Ser195–Phe215. The segment covering Gly243–Gln253 has biased composition (polar residues). Positions Pro315–Pro463 are disordered. 2 stretches are compositionally biased toward polar residues: residues Gln321–Asn338 and Gly351–Ser366. SXFG repeat units follow at residues Ser348–Gly351, Ser370–Gly373, Ser387–Gly390, and Ser407–Gly410. Over residues Thr367–Ser385 the composition is skewed to low complexity. Over residues Leu388–Gly429 the composition is skewed to polar residues. Residues Ala430–Pro443 are compositionally biased toward low complexity.

The nuclear pore complex (NPC) constitutes the exclusive means of nucleocytoplasmic transport. NPCs allow the passive diffusion of ions and small molecules and the active, nuclear transport receptor-mediated bidirectional transport of macromolecules such as proteins, RNAs, ribonucleoparticles (RNPs), and ribosomal subunits across the nuclear envelope. The 55-60 MDa NPC is composed of at least 28 different subunits: AMO1, ELYS, GLE1, GLE2, MLP1, NDC1, NIC96, NSP1, NUP133, NUP145, NUP152, NUP159, NUP170, NUP188, NUP192, NUP37, NUP49, NUP53, NUP56, NUP57, NUP82, NUP84, NUP85, POM152, POM33, POM34, SEC13 and SEH1. Due to its 8-fold rotational symmetry, all subunits are present with 8 copies or multiples thereof.

The protein resides in the nucleus. Its subcellular location is the nuclear pore complex. It is found in the nucleus membrane. Functions as a component of the nuclear pore complex (NPC). NPC components, collectively referred to as nucleoporins (NUPs), can play the role of both NPC structural components and of docking or interaction partners for transiently associated nuclear transport factors. Active directional transport is assured by both, a Phe-Gly (FG) repeat affinity gradient for these transport factors across the NPC and a transport cofactor concentration gradient across the nuclear envelope (GSP1 and GSP2 GTPases associated predominantly with GTP in the nucleus, with GDP in the cytoplasm). AMO1 is specifically important for nuclear protein and mRNA export. The polypeptide is Nucleoporin AMO1 (AMO1) (Chaetomium thermophilum (strain DSM 1495 / CBS 144.50 / IMI 039719) (Thermochaetoides thermophila)).